Here is a 598-residue protein sequence, read N- to C-terminus: NADH-quinone oxidoreductase subunit C/D (598 aa).

Positions Met-1–Gln-189 are NADH dehydrogenase I subunit C. Residues Asp-213–Arg-598 are NADH dehydrogenase I subunit D.

It in the N-terminal section; belongs to the complex I 30 kDa subunit family. The protein in the C-terminal section; belongs to the complex I 49 kDa subunit family. As to quaternary structure, NDH-1 is composed of 13 different subunits. Subunits NuoB, CD, E, F, and G constitute the peripheral sector of the complex.

The protein resides in the cell inner membrane. It catalyses the reaction a quinone + NADH + 5 H(+)(in) = a quinol + NAD(+) + 4 H(+)(out). Functionally, NDH-1 shuttles electrons from NADH, via FMN and iron-sulfur (Fe-S) centers, to quinones in the respiratory chain. The immediate electron acceptor for the enzyme in this species is believed to be ubiquinone. Couples the redox reaction to proton translocation (for every two electrons transferred, four hydrogen ions are translocated across the cytoplasmic membrane), and thus conserves the redox energy in a proton gradient. This is NADH-quinone oxidoreductase subunit C/D from Edwardsiella ictaluri (strain 93-146).